Reading from the N-terminus, the 179-residue chain is Fimbrial subunit ElfA (179 aa).

The N-terminal stretch at 1 to 21 (MKKSVLTAFITVVCATSSVMA) is a signal peptide.

It belongs to the fimbrial protein family.

It localises to the fimbrium. Functionally, part of the elfADCG-ycbUVF fimbrial operon, which promotes adhesion of bacteria to different abiotic surfaces. ElfA is the major fimbrial subunit produced by this operon. This Escherichia coli (strain K12) protein is Fimbrial subunit ElfA (elfA).